Here is a 129-residue protein sequence, read N- to C-terminus: Antimicrobial peptide NK-lysin (129 aa).

The signal sequence occupies residues 1 to 6 (PGLAFS). Residues 7-46 (GLTPEHSALARAHPCDGEQFCQNLAPEDPQGDQLLQREEL) constitute a propeptide that is removed on maturation. The Saposin B-type domain occupies 46 to 126 (LGLICESCRK…VDIKICKEKT (81 aa)). 3 cysteine pairs are disulfide-bonded: C50–C122, C53–C116, and C81–C91. Residues 125-129 (KTGLI) constitute a propeptide that is removed on maturation.

As to expression, cytotoxic T and NK cells.

It localises to the secreted. In terms of biological role, may be an effector molecule of cytotoxic activity. High activity against E.coli and B.megaterium, moderate against A.calcoaceticus and S.pyogenes. No activity against P.aeruginosa, S.aureus and Salmonella. Has some antifungal activity against C.albicans. The polypeptide is Antimicrobial peptide NK-lysin (NKL) (Sus scrofa (Pig)).